A 247-amino-acid polypeptide reads, in one-letter code: tRNA pseudouridine synthase A (247 aa).

The Nucleophile role is filled by Asp53. Tyr111 contacts substrate.

This sequence belongs to the tRNA pseudouridine synthase TruA family. Homodimer.

The enzyme catalyses uridine(38/39/40) in tRNA = pseudouridine(38/39/40) in tRNA. Its function is as follows. Formation of pseudouridine at positions 38, 39 and 40 in the anticodon stem and loop of transfer RNAs. In Bacillus velezensis (strain DSM 23117 / BGSC 10A6 / LMG 26770 / FZB42) (Bacillus amyloliquefaciens subsp. plantarum), this protein is tRNA pseudouridine synthase A.